The chain runs to 140 residues: Protein ARABIDOPSIS THALIANA ANTHER 7 (140 aa).

An N-terminal signal peptide occupies residues 1 to 20 (MKIHAILVVAFLVLMKTAVS). 4 cysteine pairs are disulfide-bonded: cysteine 29/cysteine 87, cysteine 39/cysteine 54, cysteine 55/cysteine 111, and cysteine 85/cysteine 125.

This sequence belongs to the plant LTP family. Tapetum-specific. Also present in pollen.

Its subcellular location is the endoplasmic reticulum lumen. The protein is Protein ARABIDOPSIS THALIANA ANTHER 7 of Arabidopsis thaliana (Mouse-ear cress).